We begin with the raw amino-acid sequence, 333 residues long: Homeobox protein Hox-D13 (333 aa).

Residues 1–24 form a disordered region; it reads MDGLRTDGGAAGAAPASSSSSSSV. Over residues 12–24 the composition is skewed to low complexity; the sequence is GAAPASSSSSSSV. The segment at residues 266–325 is a DNA-binding region (homeobox); the sequence is GRKKRVPYTKLQLKELENEYAINKFINKDKRRRISAATNLSERQVTIWFQNRRVKDKKIV.

Belongs to the Abd-B homeobox family.

The protein resides in the nucleus. Sequence-specific transcription factor that binds gene promoters and activates their transcription. Part of a developmental regulatory system that provides cells with specific positional identities on the anterior-posterior axis. The chain is Homeobox protein Hox-D13 (HOXD13) from Carollia perspicillata (Seba's short-tailed bat).